A 628-amino-acid polypeptide reads, in one-letter code: Netrin-4 (628 aa).

An N-terminal signal peptide occupies residues 1–18; it reads MGSCARLLLLWGCTVVAA. The 232-residue stretch at 30–261 folds into the Laminin N-terminal domain; that stretch reads CEKACNPRMG…AIYDFIVKGS (232 aa). N-linked (GlcNAc...) asparagine glycans are attached at residues Asn-56 and Asn-163. 12 disulfides stabilise this stretch: Cys-262-Cys-271, Cys-264-Cys-293, Cys-295-Cys-304, Cys-307-Cys-329, Cys-332-Cys-341, Cys-334-Cys-359, Cys-362-Cys-371, Cys-374-Cys-392, Cys-395-Cys-413, Cys-397-Cys-420, Cys-422-Cys-431, and Cys-434-Cys-446. Laminin EGF-like domains follow at residues 262 to 331, 332 to 394, and 395 to 448; these read CFCN…ECRT, CKCN…ACKP, and CSCH…GCRP. The N-linked (GlcNAc...) asparagine glycan is linked to Asn-353. Asn-483 is a glycosylation site (N-linked (GlcNAc...) asparagine). Intrachain disulfides connect Cys-506/Cys-576 and Cys-520/Cys-627. The region spanning 506–627 is the NTR domain; it reads CECKEQTLGN…KVMDILKREC (122 aa).

In terms of assembly, may form a homodimer. Expressed in kidney, spleen, mammary gland, aorta, heart, ovary, prostate and fetal spleen.

It is found in the secreted. The protein localises to the extracellular space. The protein resides in the extracellular matrix. It localises to the basement membrane. In terms of biological role, may play an important role in neural, kidney and vascular development. Promotes neurite elongation from olfactory bulb explants. The chain is Netrin-4 (NTN4) from Homo sapiens (Human).